An 82-amino-acid chain; its full sequence is Small ribosomal subunit protein bS20 (82 aa).

Positions 1–29 (MPNIKSAKKDLRRSRAAAVRNRAQRSALR) are disordered. Over residues 16-29 (AAAVRNRAQRSALR) the composition is skewed to low complexity.

It belongs to the bacterial ribosomal protein bS20 family.

Binds directly to 16S ribosomal RNA. The protein is Small ribosomal subunit protein bS20 of Gemmatimonas aurantiaca (strain DSM 14586 / JCM 11422 / NBRC 100505 / T-27).